The following is a 294-amino-acid chain: UPF0761 membrane protein YPTB0027 (294 aa).

A run of 7 helical transmembrane segments spans residues Leu-44–Phe-64, Ile-67–Ile-87, Gly-108–Trp-128, Leu-136–Ala-156, Val-185–Val-205, Ala-212–Met-232, and Val-246–Leu-266.

This sequence belongs to the UPF0761 family.

It localises to the cell inner membrane. This chain is UPF0761 membrane protein YPTB0027, found in Yersinia pseudotuberculosis serotype I (strain IP32953).